We begin with the raw amino-acid sequence, 215 residues long: Probable cutinase 3 (215 aa).

The first 17 residues, 1–17 (MHFRALLVSALATLAMA), serve as a signal peptide directing secretion. 2 disulfide bridges follow: Cys-39-Cys-118 and Cys-65-Cys-79. Residue Ser-129 is the Nucleophile of the active site. Cys-180 and Cys-187 are joined by a disulfide. The active site involves Asp-184. The active-site Proton donor/acceptor is the His-197.

This sequence belongs to the cutinase family.

It is found in the secreted. It carries out the reaction cutin + H2O = cutin monomers.. Catalyzes the hydrolysis of complex carboxylic polyesters found in the cell wall of plants. Degrades cutin, a macromolecule that forms the structure of the plant cuticle. This Aspergillus clavatus (strain ATCC 1007 / CBS 513.65 / DSM 816 / NCTC 3887 / NRRL 1 / QM 1276 / 107) protein is Probable cutinase 3.